A 229-amino-acid chain; its full sequence is Ribonuclease 3 (229 aa).

Positions 7–132 (LKAFEGRIGH…VIAAVYLDAG (126 aa)) constitute an RNase III domain. Glutamate 45 is a Mg(2+) binding site. The active site involves aspartate 49. Mg(2+) contacts are provided by aspartate 118 and glutamate 121. Glutamate 121 is an active-site residue. Residues 157 to 226 (DAKTALQEWA…ARALLARMEA (70 aa)) enclose the DRBM domain.

This sequence belongs to the ribonuclease III family. Homodimer. It depends on Mg(2+) as a cofactor.

The protein resides in the cytoplasm. It catalyses the reaction Endonucleolytic cleavage to 5'-phosphomonoester.. In terms of biological role, digests double-stranded RNA. Involved in the processing of primary rRNA transcript to yield the immediate precursors to the large and small rRNAs (23S and 16S). Processes some mRNAs, and tRNAs when they are encoded in the rRNA operon. Processes pre-crRNA and tracrRNA of type II CRISPR loci if present in the organism. This Cereibacter sphaeroides (strain ATCC 17029 / ATH 2.4.9) (Rhodobacter sphaeroides) protein is Ribonuclease 3.